The sequence spans 245 residues: Deoxyadenosine kinase (245 aa).

ATP is bound at residue 28 to 36 (GLIGAGKTT). Residues glutamate 52, tyrosine 64, and glutamine 75 each coordinate substrate. Residue aspartate 99 is the Proton acceptor of the active site. 3 residues coordinate substrate: arginine 100, aspartate 105, and glutamate 165.

The protein belongs to the DCK/DGK family.

The enzyme catalyses 2'-deoxyadenosine + ATP = dAMP + ADP + H(+). Specific kinase that phosphorylates deoxyadenosine but not any other deoxyribonucleoside, as part of the deoxyribonucleotide salvage pathway. The polypeptide is Deoxyadenosine kinase (dak) (Dictyostelium discoideum (Social amoeba)).